An 831-amino-acid polypeptide reads, in one-letter code: Valine--tRNA ligase (831 aa).

A 'HIGH' region motif is present at residues 77–87; the sequence is PFTSGELHMGH. The 'KMSKS' region signature appears at 564 to 568; it reads RMSKS. Lys567 contacts ATP.

It belongs to the class-I aminoacyl-tRNA synthetase family. ValS type 2 subfamily.

The protein resides in the cytoplasm. The catalysed reaction is tRNA(Val) + L-valine + ATP = L-valyl-tRNA(Val) + AMP + diphosphate. Its function is as follows. Catalyzes the attachment of valine to tRNA(Val). As ValRS can inadvertently accommodate and process structurally similar amino acids such as threonine, to avoid such errors, it has a 'posttransfer' editing activity that hydrolyzes mischarged Thr-tRNA(Val) in a tRNA-dependent manner. This is Valine--tRNA ligase from Sulfolobus acidocaldarius (strain ATCC 33909 / DSM 639 / JCM 8929 / NBRC 15157 / NCIMB 11770).